The primary structure comprises 650 residues: Protein ANTI-SILENCING 1 (650 aa).

Residues 38 to 169 form the BAH domain; that stretch reads DEYRLYDCVL…VGSCKVVDTI (132 aa). Disordered regions lie at residues 202-223, 229-248, 257-359, and 425-448; these read NGKS…GSVR, AFES…EKEK, KSTL…QKLD, and VTEK…ADDN. 2 stretches are compositionally biased toward basic and acidic residues: residues 259 to 270 and 277 to 287; these read TLAEERSNKDSG and NGKDQESEVKK. Residues 302–315 show a composition bias toward polar residues; sequence SNSFEASGSRTIHS. 2 stretches are compositionally biased toward basic and acidic residues: residues 348 to 358 and 438 to 448; these read LDDRPLKKQKL and RAEDKMSADDN. One can recognise an RRM domain in the interval 486-569; that stretch reads TVVLLQNLDP…RPLVASFAKI (84 aa).

In terms of assembly, component of the ASI1-AIPP1-EDM2 (AAE) RNA regulatory complex composed of at least AIPP1/EDM3, ASI1 and EDM2 and may contain CPL2, AIPP2 and AIPP3/BDT1. Binds directly to AIPP1/EDM3 and AIPP2.

In terms of biological role, collaboratively with AIPP1/EDM3 and EDM2, the AAE complex regulates alternative RNA processing (e.g. alternative splicing) and epigenetic silencing (e.g. H3K9me2) of intronic heterochromatin-containing genes as well as genic heterochromatin-containing genes by promoting distal 3' polyadenylation; may associate with intronic heterochromatin and bind gene transcripts to modulate polyadenylation. Required to prevent promoter DNA hypermethylation and transcriptional silencing of some transgenes. Plays a similar role to that of the histone H3K9 demethylase JMJ25/IBM1 in preventing CHG methylation in the bodies of numerous genes. RNA-binding protein that ensures the proper expression of JMJ25/IBM1 full-length transcript by associating with an intronic heterochromatic repeat element of JMJ25/IBM1. Also modulates transposable elements (TE) expression. Contributes to a unique mechanism to deal with the collateral effect of silencing intronic repeat elements. The sequence is that of Protein ANTI-SILENCING 1 from Arabidopsis thaliana (Mouse-ear cress).